Here is a 167-residue protein sequence, read N- to C-terminus: Leptin (167 aa).

The N-terminal stretch at 1–21 is a signal peptide; that stretch reads MRCGPLCRFLWLWPYLSCVEA. An intrachain disulfide couples Cys117 to Cys167.

Belongs to the leptin family.

It is found in the secreted. Its function is as follows. Key player in the regulation of energy balance and body weight control. Once released into the circulation, has central and peripheral effects by binding LEPR, found in many tissues, which results in the activation of several major signaling pathways. In the hypothalamus, acts as an appetite-regulating factor that induces a decrease in food intake and an increase in energy consumption by inducing anorexinogenic factors and suppressing orexigenic neuropeptides, also regulates bone mass and secretion of hypothalamo-pituitary-adrenal hormones. In the periphery, increases basal metabolism, influences reproductive function, regulates pancreatic beta-cell function and insulin secretion, is pro-angiogenic for endothelial cell and affects innate and adaptive immunity. In the arcuate nucleus of the hypothalamus, activates by depolarization POMC neurons inducing FOS and SOCS3 expression to release anorexigenic peptides and inhibits by hyperpolarization NPY neurons inducing SOCS3 with a consequent reduction on release of orexigenic peptides. In addition to its known satiety inducing effect, has a modulatory role in nutrient absorption. In the intestine, reduces glucose absorption by enterocytes by activating PKC and leading to a sequential activation of p38, PI3K and ERK signaling pathways which exerts an inhibitory effect on glucose absorption. Acts as a growth factor on certain tissues, through the activation of different signaling pathways increases expression of genes involved in cell cycle regulation such as CCND1, via JAK2-STAT3 pathway, or VEGFA, via MAPK1/3 and PI3K-AKT1 pathways. May also play an apoptotic role via JAK2-STAT3 pathway and up-regulation of BIRC5 expression. Pro-angiogenic, has mitogenic activity on vascular endothelial cells and plays a role in matrix remodeling by regulating the expression of matrix metalloproteinases (MMPs) and tissue inhibitors of metalloproteinases (TIMPs). In innate immunity, modulates the activity and function of neutrophils by increasing chemotaxis and the secretion of oxygen radicals. Increases phagocytosis by macrophages and enhances secretion of pro-inflammatory mediators. Increases cytotoxic ability of NK cells. Plays a pro-inflammatory role, in synergy with IL1B, by inducing NOS2 which promotes the production of IL6, IL8 and Prostaglandin E2, through a signaling pathway that involves JAK2, PI3K, MAP2K1/MEK1 and MAPK14/p38. In adaptive immunity, promotes the switch of memory T-cells towards T helper-1 cell immune responses. Increases CD4(+)CD25(-) T-cell proliferation and reduces autophagy during TCR (T-cell receptor) stimulation, through MTOR signaling pathway activation and BCL2 up-regulation. This is Leptin (LEP) from Canis lupus familiaris (Dog).